Here is a 386-residue protein sequence, read N- to C-terminus: tRNA N6-adenosine threonylcarbamoyltransferase (386 aa).

Residues His-112 and His-116 each contribute to the Fe cation site. Residues 134-138 (LASGG), Asp-167, Gly-180, and Asn-322 each bind substrate. Residue Asp-350 participates in Fe cation binding.

It belongs to the KAE1 / TsaD family. It depends on Fe(2+) as a cofactor.

Its subcellular location is the cytoplasm. The catalysed reaction is L-threonylcarbamoyladenylate + adenosine(37) in tRNA = N(6)-L-threonylcarbamoyladenosine(37) in tRNA + AMP + H(+). In terms of biological role, required for the formation of a threonylcarbamoyl group on adenosine at position 37 (t(6)A37) in tRNAs that read codons beginning with adenine. Is involved in the transfer of the threonylcarbamoyl moiety of threonylcarbamoyl-AMP (TC-AMP) to the N6 group of A37, together with TsaE and TsaB. TsaD likely plays a direct catalytic role in this reaction. The sequence is that of tRNA N6-adenosine threonylcarbamoyltransferase from Rickettsia akari (strain Hartford).